The following is a 307-amino-acid chain: D-alanine--D-alanine ligase (307 aa).

The region spanning 101 to 301 (KTVMRAAGVD…FGELVRWMVE (201 aa)) is the ATP-grasp domain. 127–182 (PLPPPYVVKPIAEGSSVGVIIVRDGRSHPPQILASEEWTFGEQVLAEPYIAGRELT) serves as a coordination point for ATP. 3 residues coordinate Mg(2+): Asp-251, Glu-268, and Asn-270.

Belongs to the D-alanine--D-alanine ligase family. Mg(2+) is required as a cofactor. Mn(2+) serves as cofactor.

The protein localises to the cytoplasm. It carries out the reaction 2 D-alanine + ATP = D-alanyl-D-alanine + ADP + phosphate + H(+). It functions in the pathway cell wall biogenesis; peptidoglycan biosynthesis. In terms of biological role, cell wall formation. The polypeptide is D-alanine--D-alanine ligase (Methylobacterium radiotolerans (strain ATCC 27329 / DSM 1819 / JCM 2831 / NBRC 15690 / NCIMB 10815 / 0-1)).